The primary structure comprises 413 residues: Histidine--tRNA ligase (413 aa).

This sequence belongs to the class-II aminoacyl-tRNA synthetase family. Homodimer.

The protein resides in the cytoplasm. It carries out the reaction tRNA(His) + L-histidine + ATP = L-histidyl-tRNA(His) + AMP + diphosphate + H(+). The chain is Histidine--tRNA ligase from Wolbachia sp. subsp. Brugia malayi (strain TRS).